We begin with the raw amino-acid sequence, 177 residues long: Large ribosomal subunit protein uL10 (177 aa).

It belongs to the universal ribosomal protein uL10 family. Part of the ribosomal stalk of the 50S ribosomal subunit. The N-terminus interacts with L11 and the large rRNA to form the base of the stalk. The C-terminus forms an elongated spine to which L12 dimers bind in a sequential fashion forming a multimeric L10(L12)X complex.

Functionally, forms part of the ribosomal stalk, playing a central role in the interaction of the ribosome with GTP-bound translation factors. The chain is Large ribosomal subunit protein uL10 from Legionella pneumophila (strain Paris).